A 183-amino-acid polypeptide reads, in one-letter code: Adenine phosphoribosyltransferase (183 aa).

This sequence belongs to the purine/pyrimidine phosphoribosyltransferase family. As to quaternary structure, homodimer.

It localises to the cytoplasm. It carries out the reaction AMP + diphosphate = 5-phospho-alpha-D-ribose 1-diphosphate + adenine. Its pathway is purine metabolism; AMP biosynthesis via salvage pathway; AMP from adenine: step 1/1. Its function is as follows. Catalyzes a salvage reaction resulting in the formation of AMP, that is energically less costly than de novo synthesis. The sequence is that of Adenine phosphoribosyltransferase from Shewanella sp. (strain MR-7).